The sequence spans 613 residues: MPIQVLPPQLANQIAAGEVVERPASVVKELVENSLDAGATRIDIDIERGGAKLIRIRDNGCGIKKDELALALARHATSKIASLDDLEAIISLGFRGEALASISSVSRLTLTSRTSEQQEAWQAYAEGRDMDVTVKPAAHPVGTTLEVLDLFYNTPARRKFMRTEKTEFNHIDEIIRRIALARFDVTINLSHNGKVMRQYRAVAEGGQKERRLGAICGTAFLEQALAIEWQHGDLAMRGWVADPKTMNATLAEIQYCYVNGRMMRDRLINHAIRQACEDKLGADQQPAFVLYLEIDPHQVDVNVHPAKHEVRFHQSRLVHDFIYQGVLSVLQQQAEPSLPLTEDAISPRPIPENRVAAGRNQFAEPAVARQPEAPRYSSGASAPRPTGANYPHAPVYQKQQGALYSKLLDTPAVERKENVAPSAPALDGHSQSFGRVLTIIAPDMALLERDSHIALLALPVAERWLKQVQLTPGTNAACAQPLLIPVRLKVSAEEVAVLNRAKAVLVEMGIEFVVEAHHVTIRAVPLPLRQQNLQNLIPELIGYLAQQTSFDAANTAQWMARHLASDHNLWSMAQAITVLAEVERLYPQLVKAPPGGLLQPVDLHSAMKALKDE.

Residues 364-393 (EPAVARQPEAPRYSSGASAPRPTGANYPHA) form a disordered region.

It belongs to the DNA mismatch repair MutL/HexB family.

This protein is involved in the repair of mismatches in DNA. It is required for dam-dependent methyl-directed DNA mismatch repair. May act as a 'molecular matchmaker', a protein that promotes the formation of a stable complex between two or more DNA-binding proteins in an ATP-dependent manner without itself being part of a final effector complex. The chain is DNA mismatch repair protein MutL from Enterobacter sp. (strain 638).